A 430-amino-acid chain; its full sequence is Enolase (430 aa).

Gln-165 is a (2R)-2-phosphoglycerate binding site. The active-site Proton donor is the Glu-207. Residues Asp-244, Glu-287, and Asp-314 each contribute to the Mg(2+) site. (2R)-2-phosphoglycerate is bound by residues Lys-339, Arg-368, Ser-369, and Lys-390. Catalysis depends on Lys-339, which acts as the Proton acceptor.

Belongs to the enolase family. In terms of assembly, component of the RNA degradosome, a multiprotein complex involved in RNA processing and mRNA degradation. Mg(2+) is required as a cofactor.

The protein localises to the cytoplasm. It is found in the secreted. Its subcellular location is the cell surface. It catalyses the reaction (2R)-2-phosphoglycerate = phosphoenolpyruvate + H2O. It participates in carbohydrate degradation; glycolysis; pyruvate from D-glyceraldehyde 3-phosphate: step 4/5. Functionally, catalyzes the reversible conversion of 2-phosphoglycerate (2-PG) into phosphoenolpyruvate (PEP). It is essential for the degradation of carbohydrates via glycolysis. The polypeptide is Enolase (Stenotrophomonas maltophilia (strain R551-3)).